The primary structure comprises 666 residues: Neopullulanase 1 (666 aa).

The signal sequence occupies residues 1–29 (MIKLLKPMSLSILLVFILSFSFPFPTAKA). Residues A31, D33, N35, D71, D125, N174, D176, N179, D180, G216, and D218 each coordinate Ca(2+). H296 is a substrate binding site. Residues D305, N309, F310, S312, and E317 each contribute to the Ca(2+) site. R383 contributes to the substrate binding site. Catalysis depends on D385, which acts as the Nucleophile. The Proton donor role is filled by E425. Residues 500 to 501 (HD), D545, and R549 contribute to the substrate site.

The protein belongs to the glycosyl hydrolase 13 family. Ca(2+) serves as cofactor.

The protein localises to the secreted. It carries out the reaction Hydrolysis of pullulan to panose (6-alpha-D-glucosylmaltose).. Its function is as follows. Endohydrolysis of 1,4-alpha-glucosidic linkages in pullulan to form panose. Also hydrolyzes cyclodextrins. The sequence is that of Neopullulanase 1 (tvaI) from Thermoactinomyces vulgaris.